The chain runs to 26 residues: Unknown protein 16 (26 aa).

Residues 1–26 (AINSESGVRSVVPQPCNALPNQGPEK) are disordered.

This is Unknown protein 16 from Pseudotsuga menziesii (Douglas-fir).